A 242-amino-acid polypeptide reads, in one-letter code: MAESKVVVPESVLKKIKRQEEWALAKKDEAVAAKKKSVEARKLIFKRAEQYAKEYAEKDNELIRLKREAKLKGGFYVDPEAKLLFIIRIRGINAIDPKTKKILQLLRLRQIFNGVFLKVNKATVNMLRRVEPYVTYGYPNLKSVKELIYKRGYGKLNHQRIALTDNSIVDQALGKHGIICVEDLIHEIMTVGPHFKEANNFLWPFQLKAPLGGLKKKRNHYVEGGDAGNRENFINELVRRMN.

Belongs to the universal ribosomal protein uL30 family.

This is Large ribosomal subunit protein uL30x (RPL7C) from Arabidopsis thaliana (Mouse-ear cress).